The following is a 290-amino-acid chain: 2-dehydro-3-deoxyphosphooctonate aldolase 1 (290 aa).

Ala-2 carries the post-translational modification N-acetylalanine.

It belongs to the KdsA family. In terms of tissue distribution, expressed in shoots.

The protein resides in the cytoplasm. The enzyme catalyses D-arabinose 5-phosphate + phosphoenolpyruvate + H2O = 3-deoxy-alpha-D-manno-2-octulosonate-8-phosphate + phosphate. Its function is as follows. Catalyzes the stereospecific condensation of D-arabinose 5-phosphate and phosphoenolpyruvate to form 3-deoxy-D-manno-octulosonate 8-phosphate (KDO-8-phosphate) and inorganic phosphate. Involved in the biosynthesis of 3-deoxy-D-manno-octulosonate (KDO) which is an indispensable component of rhamnogalacturonan II (RG-II), a structurally complex pectic polysaccharide of the primary cell wall. RG-II is essential for the cell wall integrity of rapidly growing tissues and pollen tube growth and elongation. This Arabidopsis thaliana (Mouse-ear cress) protein is 2-dehydro-3-deoxyphosphooctonate aldolase 1 (KDSA1).